Reading from the N-terminus, the 327-residue chain is Malate dehydrogenase (327 aa).

G12 to A18 provides a ligand contact to NAD(+). The substrate site is built by R93 and R99. NAD(+)-binding positions include N106, Q113, and V130–N132. Residues N132 and R163 each contribute to the substrate site. The active-site Proton acceptor is H188.

The protein belongs to the LDH/MDH superfamily. MDH type 2 family.

The catalysed reaction is (S)-malate + NAD(+) = oxaloacetate + NADH + H(+). Catalyzes the reversible oxidation of malate to oxaloacetate. The protein is Malate dehydrogenase of Paraburkholderia phytofirmans (strain DSM 17436 / LMG 22146 / PsJN) (Burkholderia phytofirmans).